Consider the following 190-residue polypeptide: MTTPIPLARGWLPAAPSTLDPLRKYWLFRPGALTAGLRQLGHVRLRVLAEYPTGAPRDEADGMRIAAQSPVWVREVLMSIDGVDSVVARSLTPLRASHGVWQGMRRLLTRPLADMLYHDPGIHRSVFVCRRLAAGVPFHATAIARAPAGGPEPALWARRSAFWRAGQPLLVAECFLPAFWSLARAPVAPR.

R74, L112, and E173 together coordinate substrate.

This sequence belongs to the UbiC family.

It localises to the cytoplasm. It carries out the reaction chorismate = 4-hydroxybenzoate + pyruvate. The protein operates within cofactor biosynthesis; ubiquinone biosynthesis. In terms of biological role, removes the pyruvyl group from chorismate, with concomitant aromatization of the ring, to provide 4-hydroxybenzoate (4HB) for the ubiquinone pathway. The protein is Probable chorismate pyruvate-lyase of Bordetella bronchiseptica (strain ATCC BAA-588 / NCTC 13252 / RB50) (Alcaligenes bronchisepticus).